Here is a 345-residue protein sequence, read N- to C-terminus: G-protein coupled receptor str-33 (345 aa).

The Extracellular portion of the chain corresponds to 1-11 (MTVNLRDLSRT). A helical membrane pass occupies residues 12 to 32 (IAEFAFLTALVCNSLLIYLTA). Residues 33–37 (RRTKN) are Cytoplasmic-facing. The helical transmembrane segment at 38 to 58 (ITGAYKYMIILFALLGLIFSC) threads the bilayer. Over 59–92 (TEMLARPFVHNFNASFVYFSLSNDLSEFKSLVQM) the chain is Extracellular. N-linked (GlcNAc...) asparagine glycosylation occurs at N71. Residues 93 to 113 (LLVLYSGLYSSLISFVAVQFI) traverse the membrane as a helical segment. At 114 to 133 (YRYMVLVNANLLESWFTGWK) the chain is on the cytoplasmic side. The chain crosses the membrane as a helical span at residues 134 to 154 (LVFWVFYVIFFGFAWSASVYF). The Extracellular segment spans residues 155-204 (CLFPDTYSYNYIRTEFKDVYNIGVDRVAIFILVAYEKHPSSEEYKLRPAS). Residues 205–225 (VIMIAGTISILVIQYSIMLFC) traverse the membrane as a helical segment. Residues 226–258 (GASMHRQMNEKLKNFSPDNQRLQKQFFKTLLLQ) lie on the Cytoplasmic side of the membrane. A helical transmembrane segment spans residues 259-279 (ISVPTVLFHMPIFPVLLGPFF). Over 280-288 (NFEISAESG) the chain is Extracellular. The chain crosses the membrane as a helical span at residues 289 to 309 (IIYSLFSLYPPIDGLIIMTVV). Topologically, residues 310–345 (TDYRIALTELFLGSHSGAQVEVIPVEVVSILNFSLL) are cytoplasmic.

Belongs to the nematode receptor-like protein str family. Detected in ALM and PLM mechanosensory neurons and head neurons.

It is found in the cell membrane. Regulates egg-laying and locomotion. Likely to act upstream of goa-1 to suppress 5-hydroxytryptamine (5-HT) biosynthesis in hermaphrodite-specific neurons (HSNs) through inhibition of tph-1 transcription. This Caenorhabditis elegans protein is G-protein coupled receptor str-33.